The primary structure comprises 63 residues: 2-hydroxymuconate tautomerase (63 aa).

The active-site Proton acceptor; via imino nitrogen is the proline 2.

It belongs to the 4-oxalocrotonate tautomerase family. Homohexamer.

The catalysed reaction is (2Z,4E)-2-hydroxyhexa-2,4-dienedioate = (3E)-2-oxohex-3-enedioate. Its pathway is aromatic compound metabolism; salicylate degradation. In terms of biological role, catalyzes the ketonization of 2-hydroxymuconate stereoselectively to yield 2-oxo-3-hexenedioate. The sequence is that of 2-hydroxymuconate tautomerase (nahJ) from Pseudomonas fluorescens.